The following is a 109-amino-acid chain: Fluoride-specific ion channel FluC (109 aa).

3 helical membrane-spanning segments follow: residues F21–I41, I52–Y72, and L83–L103.

It belongs to the fluoride channel Fluc/FEX (TC 1.A.43) family.

It localises to the cell inner membrane. It catalyses the reaction fluoride(in) = fluoride(out). Functionally, fluoride-specific ion channel. Important for reducing fluoride concentration in the cell, thus reducing its toxicity. The protein is Fluoride-specific ion channel FluC of Prochlorococcus marinus (strain MIT 9515).